Reading from the N-terminus, the 671-residue chain is MHKAPISTLILDSLFSNMMLAEMMNDDQLELLKHQQTGIQPVVPEGCNLYWSSLNVTGPETKPTNFVDRFRNNMPKRRVKEILHNVSGMAESGKLLAILGSSGAGKTTLMNVLTSRNLTNLDVQGSILIDGRRANKWKIREMSAFVQQHDMFVGTMTAREHLQFMARLRMGDQYYSDHERQLRVEQVLTQMGLKKCADTVIGIPNQLKGLSCGEKKRLSFASEILTCPKILFCDEPTSGLDAFMAGHVVQALRSLADNGMTVIITIHQPSSHVYSLFNNVCLMACGRVIYLGPGDQAVPLFEKCGYPCPAYYNPADHLIRTLAVIDSDRATSMKTISKIRQGFLSTDLGQSVLAIGNANKLRAASFVTGSDTSEKTKTFFNQDYNASFWTQFLALFWRSWLTVIRDPNLLSVRLLQILITAFITGIVFFQTPVTPATIISINGIMFNHIRNMNFMLQFPNVPVITAELPIVLRENANGVYRTSAYFLAKNIAELPQYIILPILYNTIVYWMSGLYPNFWNYCFASLVTILITNVAISISYAVATIFANTDVAMTILPIFVVPIMAFGGFFITFDAIPSYFKWLSSLSYFKYGYEALAINEWDSIKVIPECFNSSMTAFALDSCPKNGHQVLESIDFSASHKIFDISILFGMFIGIRIIAYVALLIRSYNNT.

Residues 1-408 (MHKAPISTLI…SWLTVIRDPN (408 aa)) are Cytoplasmic-facing. In terms of domain architecture, ABC transporter spans 64–310 (TNFVDRFRNN…FEKCGYPCPA (247 aa)). Residue 100–107 (GSSGAGKT) participates in ATP binding. Residues 409 to 429 (LLSVRLLQILITAFITGIVFF) traverse the membrane as a helical segment. At 430 to 451 (QTPVTPATIISINGIMFNHIRN) the chain is on the extracellular side. The helical transmembrane segment at 452–472 (MNFMLQFPNVPVITAELPIVL) threads the bilayer. The Cytoplasmic portion of the chain corresponds to 473-497 (RENANGVYRTSAYFLAKNIAELPQY). Residues 498–518 (IILPILYNTIVYWMSGLYPNF) traverse the membrane as a helical segment. The Extracellular portion of the chain corresponds to 519–525 (WNYCFAS). Residues 526–546 (LVTILITNVAISISYAVATIF) form a helical membrane-spanning segment. The Cytoplasmic segment spans residues 547–550 (ANTD). The helical transmembrane segment at 551–571 (VAMTILPIFVVPIMAFGGFFI) threads the bilayer. Residues 572-644 (TFDAIPSYFK…DFSASHKIFD (73 aa)) are Extracellular-facing. The helical transmembrane segment at 645-665 (ISILFGMFIGIRIIAYVALLI) threads the bilayer. Over 666-671 (RSYNNT) the chain is Cytoplasmic.

Belongs to the ABC transporter superfamily. ABCG family. Eye pigment precursor importer (TC 3.A.1.204) subfamily. In terms of tissue distribution, expressed in the intestine in both larvae and adults. Expressed in the gut of males.

It localises to the membrane. Functionally, required for efficient RNA interference (RNAi). Plays a role in germline development. The chain is ABC transporter ATP-binding protein/permease wht-1 from Caenorhabditis elegans.